The primary structure comprises 360 residues: Proline-rich protein 11 (360 aa).

Disordered regions lie at residues lysine 20 to arginine 43 and proline 174 to alanine 201. Threonine 33 is modified (phosphothreonine). Serine 40 is subject to Phosphoserine. The segment covering proline 175–alanine 201 has biased composition (pro residues). The short motif at leucine 285–serine 291 is the Phosphodegron element. At threonine 287 the chain carries Phosphothreonine. Serine 291 bears the Phosphoserine mark. The D-box motif lies at arginine 296 to valine 304. The short motif at lysine 316–asparagine 318 is the KEN box element. A Phosphodegron motif is present at residues leucine 325 to threonine 330. A disordered region spans residues alanine 340–asparagine 360. Serine 344 is subject to Phosphoserine. Threonine 346 and threonine 348 each carry phosphothreonine. Positions leucine 349–asparagine 360 are enriched in low complexity.

Post-translationally, ubiquitinated. Rapidly degraded by the proteasome; degradation may involve FBXW7-specific phosphorylated phosphodegron motifs. Ubiquitously expressed.

It is found in the cytoplasm. Its subcellular location is the nucleus. Its function is as follows. Plays a critical role in cell cycle progression. The sequence is that of Proline-rich protein 11 (PRR11) from Homo sapiens (Human).